The primary structure comprises 1068 residues: MFTLSQTSRAWFIDRARQAREERLVQKERERAAVVIQAHVRSFLCRSRLQRDIRREIDDFFKADDPESTKRSALCIFKIARKLLFLFRIKEDNERFEKLCRSILSSMDAENEPKVWYVSLACSKDLTLLWIQQIKNILWYCCDFLKQLKPEILQDSRLITLYLTMLVTFTDTSTWKILRGKGESLRPAMNHICANIMGHLNQHGFYSVLQILLTRGLARPRPCLSKGTLTAAFSLALRPVIAAQFSDNLIRPFLIHIMSVPALVTHLSTVTPERLTVLESHDMLRKFIIFLRDQDRCRDVCESLEGCHTLCLMGNLLHLGSLSPRVLEEETDGFVSLLTQTLCYCRKYVSQKKSNLTHWHPVLGWFSQSVDYGLNESMHLITKQLQFLWGVPLIRIFFCDILSKKLLESQEPAHAQPASPQNVLPVKSLLKRAFQKSASVRNILRPVGGKRVDSAEVQKVCNICVLYQTSLTTLTQIRLQILTGLTYLDDLLPKLWAFICELGPHGGLKLFLECLNNDTEESKQLLAMLMLFCDCSRHLITILDDIEVYEEQISFKLEELVTISSFLNSFVFKMIWDGIVENAKGETLELFQSVHGWLMVLYERDCRRRFTPEDHWLRKDLKPSVLFQELDRDRKRAQLILQYIPHVIPHKNRVLLFRTMVTKEKEKLGLVETSSASPHVTHITIRRSRMLEDGYEQLRQLSQHAMKGVIRVKFVNDLGVDEAGIDQDGVFKEFLEEIIKRVFDPALNLFKTTSGDERLYPSPTSYIHENYLQLFEFVGKMLGKAVYEGIVVDVPFASFFLSQLLGHHHSVFYSSVDELPSLDSEFYKNLTSIKRYDGDITDLGLTLSYDEDVMGQLVCHELIPGGKTIPVTNENKISYIHLMAHFRMHTQIKNQTAALISGFRSIIKPEWIRMFSTPELQRLISGDNAEIDLEDLKKHTVYYGGFHGSHRVIIWLWDILASDFTPDERAMFLKFVTSCSRPPLLGFAYLKPPFSIRCVEVSDDQDTGDTLGSVLRGFFTIRKREPGGRLPTSSTCFNLLKLPNYSKKSVLREKLRYAISMNTGFELS.

An N-acetylmethionine modification is found at Met1. The 30-residue stretch at 29 to 58 (RERAAVVIQAHVRSFLCRSRLQRDIRREID) folds into the IQ domain. Phosphoserine is present on Ser419. Positions 702 to 1068 (SQHAMKGVIR…ISMNTGFELS (367 aa)) constitute an HECT domain. Residue Cys1036 is the Glycyl thioester intermediate of the active site.

As to expression, widely expressed.

Its subcellular location is the postsynaptic density. The enzyme catalyses S-ubiquitinyl-[E2 ubiquitin-conjugating enzyme]-L-cysteine + [acceptor protein]-L-lysine = [E2 ubiquitin-conjugating enzyme]-L-cysteine + N(6)-ubiquitinyl-[acceptor protein]-L-lysine.. Its pathway is protein modification; protein ubiquitination. Functionally, E3 ubiquitin-protein ligase which accepts ubiquitin from an E2 ubiquitin-conjugating enzyme in the form of a thioester and then directly transfers the ubiquitin to targeted substrates. Ubiquitinates BCKDK and targets it for degradation, thereby regulating various metabolic processes. Involved in the positive regulation of neurite branching in hippocampal neurons and the control of neuronal spine number and morphology, through the ubiquitination of PPP3CC. The sequence is that of Ubiquitin-protein ligase E3B (UBE3B) from Homo sapiens (Human).